Here is a 247-residue protein sequence, read N- to C-terminus: MTQIAQLSEAEIEARFRVMGTKPVAFLIAGFAKEREPFSVHFGAGGEMFLTTPLAVEPEKGLLIFDCSGSVESNQRFLRSDRNIFIGRPGGVHVQFTTGAAREVAHEGGKAFAVALPQYIVRLQRREYFRVETPRVNPLEFFGRLADGSLLKLPVHDISISGLGVDAAVLPEGVMPGVVLPNCHFSLPGDGKDMFFSATIRNTLELERRSGARHWRIGMQFNDLSSGDETRIQRYIARIERERHELS.

Positions 124–237 constitute a PilZ domain; the sequence is QRREYFRVET…DETRIQRYIA (114 aa).

This sequence belongs to the YcgR family. As to quaternary structure, monomer. Interacts with the flagellar basal bodies.

The protein localises to the bacterial flagellum basal body. Functionally, acts as a flagellar brake, regulating swimming and swarming in a bis-(3'-5') cyclic diguanylic acid (c-di-GMP)-dependent manner. Binds 1 c-di-GMP dimer per subunit. Increasing levels of c-di-GMP lead to decreased motility. The polypeptide is Flagellar brake protein YcgR 2 (Dechloromonas aromatica (strain RCB)).